The following is a 286-amino-acid chain: S-methyl-5'-thioadenosine phosphorylase (286 aa).

Residues Ser11, 53–54 (RH), and 86–87 (SA) contribute to the phosphate site. A substrate-binding site is contributed by Met185. Thr186 lines the phosphate pocket. 209–211 (DYD) is a substrate binding site.

The protein belongs to the PNP/MTAP phosphorylase family. MTAP subfamily. As to quaternary structure, homohexamer. Dimer of a homotrimer.

It carries out the reaction S-methyl-5'-thioadenosine + phosphate = 5-(methylsulfanyl)-alpha-D-ribose 1-phosphate + adenine. It functions in the pathway amino-acid biosynthesis; L-methionine biosynthesis via salvage pathway; S-methyl-5-thio-alpha-D-ribose 1-phosphate from S-methyl-5'-thioadenosine (phosphorylase route): step 1/1. Catalyzes the reversible phosphorylation of S-methyl-5'-thioadenosine (MTA) to adenine and 5-methylthioribose-1-phosphate. Involved in the breakdown of MTA, a major by-product of polyamine biosynthesis. Responsible for the first step in the methionine salvage pathway after MTA has been generated from S-adenosylmethionine. Has broad substrate specificity with 6-aminopurine nucleosides as preferred substrates. The chain is S-methyl-5'-thioadenosine phosphorylase from Geobacter sulfurreducens (strain ATCC 51573 / DSM 12127 / PCA).